Reading from the N-terminus, the 405-residue chain is Tyrosine--tRNA ligase (405 aa).

L-tyrosine is bound at residue Y35. The short motif at 40–49 (ATSSSLHIGH) is the 'HIGH' region element. The L-tyrosine site is built by Y166 and Q170. The 'KMSKS' region motif lies at 226-230 (KMGKS). K229 provides a ligand contact to ATP. Positions 340 to 405 (ILLVDLMLDS…GKKKFLRIVI (66 aa)) constitute an S4 RNA-binding domain.

The protein belongs to the class-I aminoacyl-tRNA synthetase family. TyrS type 1 subfamily. In terms of assembly, homodimer.

It localises to the cytoplasm. The catalysed reaction is tRNA(Tyr) + L-tyrosine + ATP = L-tyrosyl-tRNA(Tyr) + AMP + diphosphate + H(+). Functionally, catalyzes the attachment of tyrosine to tRNA(Tyr) in a two-step reaction: tyrosine is first activated by ATP to form Tyr-AMP and then transferred to the acceptor end of tRNA(Tyr). The polypeptide is Tyrosine--tRNA ligase (Borreliella burgdorferi (strain ATCC 35210 / DSM 4680 / CIP 102532 / B31) (Borrelia burgdorferi)).